The primary structure comprises 314 residues: Protein nutcracker (314 aa).

Residues 1 to 62 (MSDTKSEIEG…PRLIQEKSTQ (62 aa)) are disordered. Residues 21–34 (QQQQQPQQQQNEQQ) are compositionally biased toward low complexity. A required for interaction with skpA and Cul1, but not with PI31 region spans residues 257–314 (MQMEMKLQPSLLGLPDELYFEIFRYLDKSQLNVVARVNRHLHFYSKEVERKRLKGGRS). In terms of domain architecture, F-box spans 264 to 309 (QPSLLGLPDELYFEIFRYLDKSQLNVVARVNRHLHFYSKEVERKRL).

As to quaternary structure, component of an SCF (SKP1-CUL1-F-box protein) E3 ubiquitin-protein ligase complex, at least composed of ntc, skpA and Cul1. Interacts (via F-box domain) with skpA and Cul1. Interacts with Prosalpha7 and PI31. Interacts with Bruce. As to expression, expressed in testis (at protein level).

The protein resides in the cytoplasm. In terms of biological role, functions together with PI31 to control non-apoptotic caspase activation during sperm individualization. Positively regulates PI31 stability. The sequence is that of Protein nutcracker from Drosophila melanogaster (Fruit fly).